Consider the following 517-residue polypeptide: ATP synthase subunit alpha (517 aa).

Position 173-180 (173-180) interacts with ATP; it reads GDRQTGKT.

The protein belongs to the ATPase alpha/beta chains family. F-type ATPases have 2 components, CF(1) - the catalytic core - and CF(0) - the membrane proton channel. CF(1) has five subunits: alpha(3), beta(3), gamma(1), delta(1), epsilon(1). CF(0) has three main subunits: a(1), b(2) and c(9-12). The alpha and beta chains form an alternating ring which encloses part of the gamma chain. CF(1) is attached to CF(0) by a central stalk formed by the gamma and epsilon chains, while a peripheral stalk is formed by the delta and b chains.

It is found in the cell inner membrane. It carries out the reaction ATP + H2O + 4 H(+)(in) = ADP + phosphate + 5 H(+)(out). In terms of biological role, produces ATP from ADP in the presence of a proton gradient across the membrane. The alpha chain is a regulatory subunit. The protein is ATP synthase subunit alpha of Legionella pneumophila (strain Lens).